The chain runs to 268 residues: 4-hydroxy-tetrahydrodipicolinate reductase (268 aa).

NAD(+) contacts are provided by residues 10–15 (GSTGRM), Glu-36, 99–101 (GTT), and 123–126 (APNM). Residue His-156 is the Proton donor/acceptor of the active site. (S)-2,3,4,5-tetrahydrodipicolinate is bound at residue His-157. Lys-160 serves as the catalytic Proton donor. 166–167 (GT) contacts (S)-2,3,4,5-tetrahydrodipicolinate.

This sequence belongs to the DapB family.

The protein resides in the cytoplasm. The enzyme catalyses (S)-2,3,4,5-tetrahydrodipicolinate + NAD(+) + H2O = (2S,4S)-4-hydroxy-2,3,4,5-tetrahydrodipicolinate + NADH + H(+). It catalyses the reaction (S)-2,3,4,5-tetrahydrodipicolinate + NADP(+) + H2O = (2S,4S)-4-hydroxy-2,3,4,5-tetrahydrodipicolinate + NADPH + H(+). The protein operates within amino-acid biosynthesis; L-lysine biosynthesis via DAP pathway; (S)-tetrahydrodipicolinate from L-aspartate: step 4/4. In terms of biological role, catalyzes the conversion of 4-hydroxy-tetrahydrodipicolinate (HTPA) to tetrahydrodipicolinate. This Nitrosomonas eutropha (strain DSM 101675 / C91 / Nm57) protein is 4-hydroxy-tetrahydrodipicolinate reductase.